The sequence spans 273 residues: S-adenosylmethionine decarboxylase proenzyme (273 aa).

Serine 118 (schiff-base intermediate with substrate; via pyruvic acid) is an active-site residue. Serine 118 is modified (pyruvic acid (Ser); by autocatalysis). Histidine 123 acts as the Proton acceptor; for processing activity in catalysis. Cysteine 146 serves as the catalytic Proton donor; for catalytic activity.

This sequence belongs to the prokaryotic AdoMetDC family. Type 2 subfamily. Heterooctamer of four alpha and four beta chains arranged as a tetramer of alpha/beta heterodimers. The cofactor is pyruvate. Is synthesized initially as an inactive proenzyme. Formation of the active enzyme involves a self-maturation process in which the active site pyruvoyl group is generated from an internal serine residue via an autocatalytic post-translational modification. Two non-identical subunits are generated from the proenzyme in this reaction, and the pyruvate is formed at the N-terminus of the alpha chain, which is derived from the carboxyl end of the proenzyme. The post-translation cleavage follows an unusual pathway, termed non-hydrolytic serinolysis, in which the side chain hydroxyl group of the serine supplies its oxygen atom to form the C-terminus of the beta chain, while the remainder of the serine residue undergoes an oxidative deamination to produce ammonia and the pyruvoyl group blocking the N-terminus of the alpha chain.

It catalyses the reaction S-adenosyl-L-methionine + H(+) = S-adenosyl 3-(methylsulfanyl)propylamine + CO2. The protein operates within amine and polyamine biosynthesis; S-adenosylmethioninamine biosynthesis; S-adenosylmethioninamine from S-adenosyl-L-methionine: step 1/1. Its function is as follows. Catalyzes the decarboxylation of S-adenosylmethionine to S-adenosylmethioninamine (dcAdoMet), the propylamine donor required for the synthesis of the polyamines spermine and spermidine from the diamine putrescine. The protein is S-adenosylmethionine decarboxylase proenzyme of Alkalilimnicola ehrlichii (strain ATCC BAA-1101 / DSM 17681 / MLHE-1).